We begin with the raw amino-acid sequence, 451 residues long: Uronate isomerase (451 aa).

This sequence belongs to the metallo-dependent hydrolases superfamily. Uronate isomerase family.

The catalysed reaction is D-glucuronate = D-fructuronate. It carries out the reaction aldehydo-D-galacturonate = keto-D-tagaturonate. Its pathway is carbohydrate metabolism; pentose and glucuronate interconversion. The chain is Uronate isomerase from Thermotoga sp. (strain RQ2).